The chain runs to 206 residues: Large ribosomal subunit protein uL4 (206 aa).

A disordered region spans residues 45-75 (RQGTHSTKTRGEVRGGGRKPWRQKGTGRARQ). Basic residues predominate over residues 60–71 (GGRKPWRQKGTG).

This sequence belongs to the universal ribosomal protein uL4 family. In terms of assembly, part of the 50S ribosomal subunit.

Its function is as follows. One of the primary rRNA binding proteins, this protein initially binds near the 5'-end of the 23S rRNA. It is important during the early stages of 50S assembly. It makes multiple contacts with different domains of the 23S rRNA in the assembled 50S subunit and ribosome. Forms part of the polypeptide exit tunnel. The protein is Large ribosomal subunit protein uL4 of Thermoanaerobacter pseudethanolicus (strain ATCC 33223 / 39E) (Clostridium thermohydrosulfuricum).